Here is a 206-residue protein sequence, read N- to C-terminus: N-(5'-phosphoribosyl)anthranilate isomerase (206 aa).

It belongs to the TrpF family.

The enzyme catalyses N-(5-phospho-beta-D-ribosyl)anthranilate = 1-(2-carboxyphenylamino)-1-deoxy-D-ribulose 5-phosphate. Its pathway is amino-acid biosynthesis; L-tryptophan biosynthesis; L-tryptophan from chorismate: step 3/5. The polypeptide is N-(5'-phosphoribosyl)anthranilate isomerase (Azotobacter vinelandii (strain DJ / ATCC BAA-1303)).